Reading from the N-terminus, the 879-residue chain is JmjC domain-containing histone demethylation protein 1 (879 aa).

3 disordered regions span residues M1–K45, S117–K212, and K407–K449. The segment at P23 to R116 adopts a PHD-type zinc-finger fold. Basic and acidic residues-rich tracts occupy residues I183–Q192 and K407–E433. The 183-residue stretch at N416 to I598 folds into the JmjC domain. T472 serves as a coordination point for substrate. Positions 475 and 477 each coordinate Fe cation. K492 serves as a coordination point for substrate. A Fe cation-binding site is contributed by H566. Residues H763 to H879 are disordered. Residues E769–Q782 show a composition bias toward polar residues. The span at P786–E818 shows a compositional bias: low complexity. Residues F848–I864 are compositionally biased toward basic and acidic residues.

Belongs to the JHDM1 histone demethylase family. Fe(2+) serves as cofactor.

It is found in the nucleus. It carries out the reaction N(6),N(6)-dimethyl-L-lysyl(36)-[histone H3] + 2 2-oxoglutarate + 2 O2 = L-lysyl(36)-[histone H3] + 2 formaldehyde + 2 succinate + 2 CO2. Functionally, histone demethylase that specifically demethylates 'Lys-36' of histone H3, thereby playing a central role in histone code. The sequence is that of JmjC domain-containing histone demethylation protein 1 (JHD1) from Cryptococcus neoformans var. neoformans serotype D (strain B-3501A) (Filobasidiella neoformans).